We begin with the raw amino-acid sequence, 47 residues long: Protein YqgG (47 aa).

The chain is Protein YqgG from Escherichia coli (strain K12).